A 439-amino-acid polypeptide reads, in one-letter code: Ribosomal protein uS12 methylthiotransferase RimO (439 aa).

Residues 6–116 (GKVGFVSLGC…VMNQVHQVAP (111 aa)) enclose the MTTase N-terminal domain. 6 residues coordinate [4Fe-4S] cluster: Cys-15, Cys-51, Cys-80, Cys-148, Cys-152, and Cys-155. The Radical SAM core domain maps to 134–371 (LTPKHYAYLK…MEVQQRISAS (238 aa)). One can recognise a TRAM domain in the interval 374 to 439 (QAKIGKRMDV…DEYDLWGRPV (66 aa)).

Belongs to the methylthiotransferase family. RimO subfamily. Requires [4Fe-4S] cluster as cofactor.

Its subcellular location is the cytoplasm. It catalyses the reaction L-aspartate(89)-[ribosomal protein uS12]-hydrogen + (sulfur carrier)-SH + AH2 + 2 S-adenosyl-L-methionine = 3-methylsulfanyl-L-aspartate(89)-[ribosomal protein uS12]-hydrogen + (sulfur carrier)-H + 5'-deoxyadenosine + L-methionine + A + S-adenosyl-L-homocysteine + 2 H(+). Its function is as follows. Catalyzes the methylthiolation of an aspartic acid residue of ribosomal protein uS12. The chain is Ribosomal protein uS12 methylthiotransferase RimO from Hahella chejuensis (strain KCTC 2396).